The sequence spans 261 residues: CD40 ligand (261 aa).

Over 1–22 (MIETYNQPSPRSAATGLPVRMK) the chain is Cytoplasmic. A helical; Signal-anchor for type II membrane protein transmembrane segment spans residues 23–43 (IFMYLLTIFLITQMIGSALFA). Over 44-261 (VYLHRRLDKI…GFTSFGLLKL (218 aa)) the chain is Extracellular. The THD domain occupies 122 to 261 (IAAHVISEAS…GFTSFGLLKL (140 aa)). An intrachain disulfide couples cysteine 178 to cysteine 218. Residue asparagine 240 is glycosylated (N-linked (GlcNAc...) asparagine).

The protein belongs to the tumor necrosis factor family. Homotrimer. Interacts with CD28. CD40 ligand, soluble form: Exists as either a monomer or a homotrimer. Forms a ternary complex between CD40 and integrins for CD40-CD40LG signaling. In terms of processing, the soluble form derives from the membrane form by proteolytic processing.

The protein resides in the cell membrane. It localises to the cell surface. Its subcellular location is the secreted. In terms of biological role, cytokine that acts as a ligand to CD40/TNFRSF5. Costimulates T-cell proliferation and cytokine production. Its cross-linking on T-cells generates a costimulatory signal which enhances the production of IL4 and IL10 in conjunction with the TCR/CD3 ligation and CD28 costimulation. Induces the activation of NF-kappa-B. Induces the activation of kinases MAPK8 and PAK2 in T-cells. Mediates B-cell proliferation in the absence of co-stimulus as well as IgE production in the presence of IL4. Involved in immunoglobulin class switching. Acts as a ligand for integrins, specifically ITGA5:ITGB1 and ITGAV:ITGB3; both integrins and the CD40 receptor are required for activation of CD40-CD40LG signaling, which have cell-type dependent effects, such as B-cell activation, NF-kappa-B signaling and anti-apoptotic signaling. The protein is CD40 ligand (CD40LG) of Cercocebus atys (Sooty mangabey).